We begin with the raw amino-acid sequence, 620 residues long: Threonine--tRNA ligase (620 aa).

The editing domain stretch occupies residues Met1–Glu141. The tract at residues Pro197–Pro496 is catalytic. Residues Cys289, His341, and His465 each coordinate Zn(2+).

This sequence belongs to the class-II aminoacyl-tRNA synthetase family. In terms of assembly, homodimer. The cofactor is Zn(2+).

Its subcellular location is the cytoplasm. It carries out the reaction tRNA(Thr) + L-threonine + ATP = L-threonyl-tRNA(Thr) + AMP + diphosphate + H(+). With respect to regulation, not inhibited by 1 uM borrelidin (BN); probably does not bind BN. Catalyzes the attachment of threonine to tRNA(Thr) in a two-step reaction: L-threonine is first activated by ATP to form Thr-AMP and then transferred to the acceptor end of tRNA(Thr). Also activates L-serine, but does not detectably transfer it to tRNA(Thr). Edits incorrectly charged L-seryl-tRNA(Thr) via its editing domain. Has no activity on correctly acylated L-seryl-tRNA(Ser) or L-threonyl-tRNA(Thr). Deacylates correctly charged glycyl-tRNA(Gly), but not glycyl-tRNA(Gly)(2'-dA76) (the terminal 2'-OH of tRNA adenine 76 has been dehydroxylated) nor the 2'-fluoro tRNA derivative, strongly suggesting the editing function is tRNA catalyzed. This is Threonine--tRNA ligase from Methanocaldococcus jannaschii (strain ATCC 43067 / DSM 2661 / JAL-1 / JCM 10045 / NBRC 100440) (Methanococcus jannaschii).